The sequence spans 73 residues: Dermaseptin-1 (73 aa).

The signal sequence occupies residues 1–22 (MAFLKKSIFLALFLGMVSLSIC). Residues 23–43 (EEEKRENEGEEEQEDDEQSEM) constitute a propeptide, removed in mature form. Positions 25 to 46 (EKRENEGEEEQEDDEQSEMKRG) are disordered. Positions 30–40 (EGEEEQEDDEQ) are enriched in acidic residues. Position 70 is a leucine amide (leucine 70). A propeptide spans 72 to 73 (EQ) (removed in mature form).

As to expression, expressed by the skin glands.

Its subcellular location is the secreted. Functionally, has antiparasitic activity against trypomastigote form of T.cruzi (IC(50)=0.68 uM) in vitro but not against L.infantum. Probably acts by permeabilizing cell membranes. In vitro, shows no cytotoxicity against macrophages. Has antibacterial activity. In Pithecopus nordestinus (Northeastern Brazilian leaf frog), this protein is Dermaseptin-1.